The primary structure comprises 768 residues: Pentatricopeptide repeat-containing protein At3g53360, mitochondrial (768 aa).

A mitochondrion-targeting transit peptide spans 1 to 70 (MATMLRLGAR…SSFKIRLRTY (70 aa)). PPR repeat units lie at residues 30–60 (TEEL…AQKN), 66–100 (RLRT…NCKY), 101–131 (DTIL…MPER), 132–166 (NLVS…DLVP), 167–201 (DQFA…ESSS), 202–232 (HLIA…IPMK), 233–267 (DLIS…GVFH), 269–303 (NEYI…ELAG), 304–334 (NAIA…IERP), 335–369 (DTAS…GFIP), 370–404 (DAIS…GFLA), 405–435 (DLTV…FRNN), 437–471 (DSVS…ECEP), 472–506 (DHIT…GLAP), 507–537 (EQFI…MDNR), 538–572 (DVVS…GIEP), 573–608 (NHVT…GISP), and 609–639 (TKEH…MKLE). The interval 644-719 (VWKTLLSACK…IPGQSWIEIE (76 aa)) is type E motif. The segment at 720–750 (DKIHIFFAEDIFHPERDDIYTVLHNIWSQML) is type E(+) motif.

This sequence belongs to the PPR family. PCMP-E subfamily.

The protein resides in the mitochondrion. The chain is Pentatricopeptide repeat-containing protein At3g53360, mitochondrial (PCMP-E86) from Arabidopsis thaliana (Mouse-ear cress).